The following is a 144-amino-acid chain: Transcription antitermination protein NusB (144 aa).

Belongs to the NusB family.

Its function is as follows. Involved in transcription antitermination. Required for transcription of ribosomal RNA (rRNA) genes. Binds specifically to the boxA antiterminator sequence of the ribosomal RNA (rrn) operons. The sequence is that of Transcription antitermination protein NusB from Streptococcus thermophilus (strain CNRZ 1066).